The following is a 407-amino-acid chain: Glycolate oxidase iron-sulfur subunit (407 aa).

4Fe-4S ferredoxin-type domains follow at residues 14–47 (RALE…ELDG) and 66–95 (LKTQ…HNLL). Cys25, Cys28, Cys31, Cys35, Cys75, Cys78, Cys81, and Cys85 together coordinate [4Fe-4S] cluster.

As to quaternary structure, the glycolate oxidase likely consists of three subunits, GlcD, GlcE and GlcF. It depends on [4Fe-4S] cluster as a cofactor.

It is found in the cell inner membrane. The catalysed reaction is glycolate + A = glyoxylate + AH2. It carries out the reaction (R)-lactate + A = pyruvate + AH2. With respect to regulation, in vitro the glycolate oxidase activity is inhibited by the sulfhydryl inhibitors CuSO4 and PCMB, by KCN, but not by the metal complexing agent EDTA. Component of a complex that catalyzes the oxidation of glycolate to glyoxylate. Is required for E.coli to grow on glycolate as a sole source of carbon. Is also able to oxidize D-lactate ((R)-lactate) with a similar rate. Does not link directly to O(2), and 2,6-dichloroindophenol (DCIP) and phenazine methosulfate (PMS) can act as artificial electron acceptors in vitro, but the physiological molecule that functions as a primary electron acceptor during glycolate oxidation is unknown. The sequence is that of Glycolate oxidase iron-sulfur subunit from Escherichia coli (strain K12).